A 661-amino-acid chain; its full sequence is MNVILVLVVLFFAGDCAKIRKIIDFLEKDAPNDIEKTPNYNEESLAVKRNKNFNPCLENPKICSNRGKCLHENGNFYCICPVTHYGKTCEHVSDQTNCEKHLCQNNSTCVSIKSLRTIVNTVLLRQIRVQRKVNGSKAALTNEELAEIDLEVNYECICQKGYFGGLCDESEADRTCQEVYCLGRGKGAINATGKCECECENQFFGDRCEQISACFDTQCDNGGICEDVVDWKTKTVTATCKCPSAIELIGGTVTGENCETLQIPSTAPKEFIPCAEGSNSTMFFKKFIANISLEYMDDISELEAIKNDYNDGKNVNGTMTDGWCRNDGKCVPEVVRVNSSRAYYIYRCECTNPLTDGYYCEYKRHDSCSLTREEVARGDRWDEKCTDSQHGACVDISGVAHCVCKPDYTGEKCEIFDPCARQPCKHGDCIPIPNTADVAFGTSRYQCLCPLSAKLNPESQACMEINEKKCAPGACGNGRCVPCESDADDLMPLCNDNDNRQGFRCLCEAGYLPPFCKVHTNPCYQNLCQNSATCHIDPKQRSYDCQCVNGTRGSLCENVDDSCDAFGNKICVHGTCINDEYFHRGFSCECDDGFEGLDCNVEIAWSSVMTNRLMKNYEFSLPLVACFVSLAILLPVIVISRRRQGRVEEAKKTSEVKTENP.

Positions 1-16 are cleaved as a signal peptide; sequence MNVILVLVVLFFAGDC. The Extracellular segment spans residues 17–618; that stretch reads AKIRKIIDFL…MTNRLMKNYE (602 aa). The EGF-like 1 domain maps to 52–90; it reads NFNPCLENPKICSNRGKCLHENGNFYCICPVTHYGKTCE. Cystine bridges form between C56/C69, C63/C78, and C80/C89. N-linked (GlcNAc...) asparagine glycosylation is found at N105, N106, N134, and N190. The EGF-like 2 domain occupies 210 to 259; it reads QISACFDTQCDNGGICEDVVDWKTKTVTATCKCPSAIELIGGTVTGENCE. Cystine bridges form between C214–C225, C219–C240, and C242–C258. Residues N279, N290, N316, and N338 are each glycosylated (N-linked (GlcNAc...) asparagine). The Cell attachment site motif lies at 377–379; it reads RGD. EGF-like domains lie at 377-414, 519-557, and 559-600; these read RGDR…EKCE, HTNP…SLCE, and VDDS…LDCN. Intrachain disulfides connect C385–C402, C393–C404, C413–C419, C523–C534, C528–C545, C547–C556, C563–C576, C571–C588, and C590–C599. The N-linked (GlcNAc...) asparagine glycan is linked to N549. A helical membrane pass occupies residues 619-639; the sequence is FSLPLVACFVSLAILLPVIVI. The Cytoplasmic segment spans residues 640–661; the sequence is SRRRQGRVEEAKKTSEVKTENP.

In terms of tissue distribution, expressed in spermatids, during spermogenesis expression is primarily localized to the pseudopod.

It is found in the cytoplasm. The protein localises to the membrane. Required for fertilization. May be required for cell adhesion and/or function as a signaling molecule. The sequence is that of Sperm transmembrane protein 9 (spe-9) from Caenorhabditis elegans.